A 370-amino-acid chain; its full sequence is Ganglioside-induced differentiation-associated protein 1-like 1 (370 aa).

The GST N-terminal domain maps to 45–129; it reads ESLVLYHWTQ…YVERTFTGEH (85 aa). A GST C-terminal domain is found at 177-344; sequence PKYATAEIRR…RLVKRKPPSF (168 aa).

This sequence belongs to the GST superfamily.

The protein is Ganglioside-induced differentiation-associated protein 1-like 1 (Gdap1l1) of Mus musculus (Mouse).